The sequence spans 149 residues: Large ribosomal subunit protein eL19 (149 aa).

The segment at 45-94 (VADGTIDAEDTQGNSRGRARERDAKESYGHKKGAGSRKGKAGARQNEKRE) is disordered. A compositionally biased stretch (basic and acidic residues) spans 62–73 (RARERDAKESYG). The span at 74–85 (HKKGAGSRKGKA) shows a compositional bias: basic residues.

This sequence belongs to the eukaryotic ribosomal protein eL19 family. As to quaternary structure, part of the 50S ribosomal subunit.

In terms of biological role, binds to the 23S rRNA. In Halobacterium salinarum (strain ATCC 700922 / JCM 11081 / NRC-1) (Halobacterium halobium), this protein is Large ribosomal subunit protein eL19.